Consider the following 413-residue polypeptide: Cell division protein FtsZ 2 (413 aa).

GTP-binding positions include 132–134, Glu171, Arg175, and Asp218; that span reads GTG.

This sequence belongs to the FtsZ family. As to quaternary structure, homodimer. Polymerizes to form a dynamic ring structure in a strictly GTP-dependent manner. Interacts directly with several other division proteins.

The protein resides in the cytoplasm. Functionally, essential cell division protein that forms a contractile ring structure (Z ring) at the future cell division site. The regulation of the ring assembly controls the timing and the location of cell division. One of the functions of the FtsZ ring is to recruit other cell division proteins to the septum to produce a new cell wall between the dividing cells. Binds GTP and shows GTPase activity. This Thermococcus kodakarensis (strain ATCC BAA-918 / JCM 12380 / KOD1) (Pyrococcus kodakaraensis (strain KOD1)) protein is Cell division protein FtsZ 2.